Consider the following 69-residue polypeptide: Large ribosomal subunit protein bL31 (69 aa).

Residues Cys-17, Cys-19, Cys-37, and Cys-40 each contribute to the Zn(2+) site.

It belongs to the bacterial ribosomal protein bL31 family. Type A subfamily. Part of the 50S ribosomal subunit. Zn(2+) serves as cofactor.

Functionally, binds the 23S rRNA. This chain is Large ribosomal subunit protein bL31, found in Clostridium novyi (strain NT).